Here is a 345-residue protein sequence, read N- to C-terminus: Acetylserotonin O-methyltransferase (345 aa).

S-adenosyl-L-methionine is bound by residues tyrosine 147, tryptophan 164, aspartate 210, 235-237 (GDF), and arginine 252. Histidine 255 serves as the catalytic Proton donor/acceptor. Substrate contacts are provided by aspartate 256, asparagine 302, and glutamine 306.

Belongs to the class I-like SAM-binding methyltransferase superfamily. Cation-independent O-methyltransferase family. Homodimer. In terms of tissue distribution, expressed in the pineal gland (at protein level). Not detectable in retina, nor in liver.

The enzyme catalyses N-acetylserotonin + S-adenosyl-L-methionine = melatonin + S-adenosyl-L-homocysteine + H(+). It participates in aromatic compound metabolism; melatonin biosynthesis; melatonin from serotonin: step 1/2. Catalyzes the transfer of a methyl group onto N-acetylserotonin, producing melatonin (N-acetyl-5-methoxytryptamine). This chain is Acetylserotonin O-methyltransferase (ASMT), found in Bos taurus (Bovine).